The primary structure comprises 445 residues: Phosphoglucosamine mutase (445 aa).

Catalysis depends on S102, which acts as the Phosphoserine intermediate. The Mg(2+) site is built by S102, D241, D243, and D245. S102 carries the post-translational modification Phosphoserine.

It belongs to the phosphohexose mutase family. It depends on Mg(2+) as a cofactor. In terms of processing, activated by phosphorylation.

The enzyme catalyses alpha-D-glucosamine 1-phosphate = D-glucosamine 6-phosphate. Functionally, catalyzes the conversion of glucosamine-6-phosphate to glucosamine-1-phosphate. This is Phosphoglucosamine mutase from Zymomonas mobilis subsp. mobilis (strain ATCC 31821 / ZM4 / CP4).